The following is a 699-amino-acid chain: MDNEEVNEECMRLFFKNARAHLDKHLTSRLTCDENAYITFRCFLDGIHRKSTRFLEELLLKQENMYHNNNYERINDSVIPLVLKLLWLQIHEPTLQWFEHWFHDIMRLSNRRKFRVFRIFQKKMIQFFKITHRYYYDIIEHLCAKYDMNSVISNALFAKLNLMQYTDGLSTHEKIILNTSNPLTFSIVISLQRCVINLGSTHFYKTLLNKPSNKPKSVEGFEKSIRYLNIASLYLPAVGDTYFQRAKIYLITGKFSLYFFELVRGALVRIPSKCALNNLKDFILTPDFPERRRLMKKLAILVSKDLKGEKSFFEGQIVLQFLSIVEHTLVPQSWNASRASNCWLLKEHLQMAALKYHSGNINVILENLAATMGSFDLMFTTRKSKEQKNKLKYADLSERQVFFLDLSFDFIANIIDVVIKPSWQKNMEDFRYLAIIRLLMCWIKSYRSILQYTHRHRKFCTSFALLLNDLINSPLNCSGNIYSHRPKRSYLFREDIIFREFSCINFALTDFNDDYVYDSPDMINNIIGCPTLTKVLSPKEECVLRIRSIIFSGMKFLEKNDTGVIWNASKYKFDLISPNIKIKRQIALSEISSKINVKTQQERVVSSRKVEAKRDEQQRKRAGKIAVTELEKQFANVRRTKKLSPLPEKDGVSSELVKHAASRGRKTITGPLSSDFLSYPDEAIDADEDITVQVPDTPT.

The tract at residues Lys641 to Arg663 is disordered. Positions Pro647 to Lys658 are enriched in basic and acidic residues.

This sequence belongs to the EST1 family. In terms of assembly, interacts with CDC13 and MPS3.

It localises to the nucleus. The protein localises to the chromosome. Its subcellular location is the telomere. Directly involved in telomere replication. Associates with telomerase and during its interaction with CDC13, telomerase activity is promoted. The polypeptide is Telomere elongation protein EST1 (EST1) (Saccharomyces cerevisiae (strain ATCC 204508 / S288c) (Baker's yeast)).